A 306-amino-acid polypeptide reads, in one-letter code: UDP-3-O-acyl-N-acetylglucosamine deacetylase (306 aa).

Positions 79, 238, and 242 each coordinate Zn(2+). His265 functions as the Proton donor in the catalytic mechanism.

This sequence belongs to the LpxC family. Zn(2+) serves as cofactor.

The catalysed reaction is a UDP-3-O-[(3R)-3-hydroxyacyl]-N-acetyl-alpha-D-glucosamine + H2O = a UDP-3-O-[(3R)-3-hydroxyacyl]-alpha-D-glucosamine + acetate. Its pathway is glycolipid biosynthesis; lipid IV(A) biosynthesis; lipid IV(A) from (3R)-3-hydroxytetradecanoyl-[acyl-carrier-protein] and UDP-N-acetyl-alpha-D-glucosamine: step 2/6. Its function is as follows. Catalyzes the hydrolysis of UDP-3-O-myristoyl-N-acetylglucosamine to form UDP-3-O-myristoylglucosamine and acetate, the committed step in lipid A biosynthesis. The chain is UDP-3-O-acyl-N-acetylglucosamine deacetylase from Shewanella sediminis (strain HAW-EB3).